The primary structure comprises 175 residues: Peptide methionine sulfoxide reductase MsrA (175 aa).

Cys10 is an active-site residue.

The protein belongs to the MsrA Met sulfoxide reductase family.

It carries out the reaction L-methionyl-[protein] + [thioredoxin]-disulfide + H2O = L-methionyl-(S)-S-oxide-[protein] + [thioredoxin]-dithiol. The catalysed reaction is [thioredoxin]-disulfide + L-methionine + H2O = L-methionine (S)-S-oxide + [thioredoxin]-dithiol. Has an important function as a repair enzyme for proteins that have been inactivated by oxidation. Catalyzes the reversible oxidation-reduction of methionine sulfoxide in proteins to methionine. This Clavibacter michiganensis subsp. michiganensis (strain NCPPB 382) protein is Peptide methionine sulfoxide reductase MsrA.